The following is a 479-amino-acid chain: GTPase Obg (479 aa).

One can recognise an Obg domain in the interval 2–159 (PRFVDRVVIH…RDLTLELKTV (158 aa)). The 181-residue stretch at 160 to 340 (ADVGLVGFPS…LIFGLWQMVS (181 aa)) folds into the OBG-type G domain. GTP-binding positions include 166–173 (GFPSAGKS), 191–195 (FTTLV), 212–215 (DVPG), 292–295 (NKID), and 321–323 (STV). Positions 173 and 193 each coordinate Mg(2+). An OCT domain is found at 358 to 436 (PVPVDDSGFD…IGEMTFDWEP (79 aa)). The segment at 438–479 (TPAGGHVAMSGRGTDVRLERSDRVGAAERKAARRQRRERDDD) is disordered. Positions 451–467 (TDVRLERSDRVGAAERK) are enriched in basic and acidic residues.

This sequence belongs to the TRAFAC class OBG-HflX-like GTPase superfamily. OBG GTPase family. As to quaternary structure, monomer. Mg(2+) is required as a cofactor.

Its subcellular location is the cytoplasm. Functionally, an essential GTPase which binds GTP, GDP and possibly (p)ppGpp with moderate affinity, with high nucleotide exchange rates and a fairly low GTP hydrolysis rate. Plays a role in control of the cell cycle, stress response, ribosome biogenesis and in those bacteria that undergo differentiation, in morphogenesis control. In Mycobacterium ulcerans (strain Agy99), this protein is GTPase Obg.